The sequence spans 142 residues: Putative FK506-binding protein 9-like protein (142 aa).

A PPIase FKBP-type domain is found at 1 to 49 (MDMGLREMCVGEKRTVIIPPHLGYGEAGVDGEVPGSAVLVFDIELLELV). 2 EF-hand domains span residues 60 to 95 (WNGE…QVAS) and 105 to 140 (DAEL…AKQD). The Ca(2+) site is built by D118, N120, D122, K124, and E129.

In Homo sapiens (Human), this protein is Putative FK506-binding protein 9-like protein (FKBP9P1).